We begin with the raw amino-acid sequence, 84 residues long: Exodeoxyribonuclease 7 small subunit (84 aa).

The segment at 65-84 is disordered; the sequence is QEGDWTTSPFEPASGEPPGG.

This sequence belongs to the XseB family. In terms of assembly, heterooligomer composed of large and small subunits.

It localises to the cytoplasm. The catalysed reaction is Exonucleolytic cleavage in either 5'- to 3'- or 3'- to 5'-direction to yield nucleoside 5'-phosphates.. Its function is as follows. Bidirectionally degrades single-stranded DNA into large acid-insoluble oligonucleotides, which are then degraded further into small acid-soluble oligonucleotides. The protein is Exodeoxyribonuclease 7 small subunit of Syntrophobacter fumaroxidans (strain DSM 10017 / MPOB).